The following is a 1828-amino-acid chain: AT-rich interactive domain-containing protein 2 (1828 aa).

The residue at position 2 (alanine 2) is an N-acetylalanine. Residue serine 4 is modified to Phosphoserine. Glycyl lysine isopeptide (Lys-Gly) (interchain with G-Cter in SUMO2) cross-links involve residues lysine 7, lysine 15, and lysine 119. In terms of domain architecture, ARID spans 13–105 (RRKGLAFLDE…YLEKYEKVHH (93 aa)). Positions 313-317 (LRFLL) match the LXXLL motif. Positions 524 to 603 (ACQWLNAHFE…IHVIGVKRRA (80 aa)) form a DNA-binding region, RFX-type winged-helix. Lysine 555 participates in a covalent cross-link: Glycyl lysine isopeptide (Lys-Gly) (interchain with G-Cter in SUMO2). Phosphoserine occurs at positions 631 and 635. At threonine 653 the chain carries Phosphothreonine. A Phosphoserine modification is found at serine 689. Residue threonine 692 is modified to Phosphothreonine. Disordered regions lie at residues 824–843 (TSPQPMHTSSQQTAAGSQPQ), 962–1028 (LTGQ…QVQV), 1245–1339 (KEAT…EPVD), 1360–1462 (KGDG…RPSV), 1483–1503 (HSGPRVTPSALSSDARSTNGT), and 1566–1618 (SAAQ…HADP). A compositionally biased stretch (polar residues) spans 987 to 1011 (AMSSSSTLQSQGPPPTVSQMLSVKR). The segment covering 1012–1028 (QQQQQHSPAAPAQQVQV) has biased composition (low complexity). A compositionally biased stretch (basic and acidic residues) spans 1245-1259 (KEATGLHVHERKIEV). Positions 1267–1283 (RGTTNTSNGDTSESELQ) are enriched in polar residues. Serine 1294 carries the phosphoserine modification. Composition is skewed to polar residues over residues 1295–1320 (DSSLPPSNSGKLQSETSQCSLISNGP) and 1366–1379 (LSKNIPNHKTSNHV). At serine 1385 the chain carries Phosphoserine. 2 stretches are compositionally biased toward polar residues: residues 1390 to 1400 (QGTSGATQQDT) and 1419 to 1428 (GSPSTSSMQE). The span at 1453–1462 (SDVPQQRPSV) shows a compositional bias: low complexity. The residue at position 1491 (serine 1491) is a Phosphoserine. 2 stretches are compositionally biased toward polar residues: residues 1491 to 1503 (SALSSDARSTNGT) and 1567 to 1586 (AAQQKQQHPPTYMQSVAPQN). Low complexity predominate over residues 1594 to 1614 (AVQVQGQPSSSQPSPVSASSQ). Residues 1626–1651 (FMCLWQSCKKWFQTPSQVFYHAATEH) form a C2H2-type zinc finger. Residues lysine 1695, lysine 1710, and lysine 1725 each participate in a glycyl lysine isopeptide (Lys-Gly) (interchain with G-Cter in SUMO2) cross-link. Residues 1697-1726 (DEPGQVANQKSSTKQPTVGGTGSAPRAQKA) form a disordered region. Residues 1702-1714 (VANQKSSTKQPTV) show a composition bias toward polar residues.

Belongs to the RFX family. As to quaternary structure, component of the SWI/SNF-B (PBAF) chromatin remodeling complex, at least composed of SMARCA4/BRG1, SMARCB1/BAF47/SNF5, ACTL6A/BAF53A or ACTL6B/BAF53B, SMARCE1/BAF57, SMARCD1/BAF60A, SMARCD2/BAF60B, perhaps SMARCD3/BAF60C, SMARCC1/BAF155, SMARCC2/BAF170, PBRM1/BAF180, ARID2/BAF200 and actin. Interacts with SRF. Forms complexes with SRF and SRF cofactors MYOCD, NKX2-5 and SRFBP1. In terms of tissue distribution, highly expressed in testis, expressed in heart, liver and kidney.

The protein resides in the nucleus. In terms of biological role, involved in transcriptional activation and repression of select genes by chromatin remodeling (alteration of DNA-nucleosome topology). Required for the stability of the SWI/SNF chromatin remodeling complex SWI/SNF-B (PBAF). May be involved in targeting the complex to different genes. May be involved in regulating transcriptional activation of cardiac genes. This is AT-rich interactive domain-containing protein 2 from Mus musculus (Mouse).